We begin with the raw amino-acid sequence, 511 residues long: Sodium/proline symporter (511 aa).

Transmembrane regions (helical) follow at residues 16–36 (WQTY…AFTY), 53–73 (IGPY…WMIM), 84–104 (LSAM…YFVV), 138–158 (IISG…GFVS), 173–193 (FGLI…GYLA), 199–219 (FFQG…AMMN), 239–259 (LFKG…LGYF), 285–305 (ISWM…GIAF), 326–346 (VLFH…AIMS), 380–400 (FVMI…AIAW), 409–429 (LVGN…LFAL), 437–457 (AGAV…IAWI), and 466–486 (IFGL…TYVV).

It belongs to the sodium:solute symporter (SSF) (TC 2.A.21) family.

The protein resides in the cell membrane. It carries out the reaction L-proline(in) + Na(+)(in) = L-proline(out) + Na(+)(out). Catalyzes the sodium-dependent uptake of extracellular L-proline. Since most S.aureus strains are L-proline auxotrophs, this transporter may aid the bacterial persistence during an infection of tissues with low proline concentrations. The chain is Sodium/proline symporter from Staphylococcus aureus.